The following is a 112-amino-acid chain: K(+)/H(+) antiporter modulator KhtS (112 aa).

Residues tyrosine 42–histidine 64 are disordered. The segment covering serine 47–proline 60 has biased composition (polar residues).

It localises to the cell membrane. Functionally, modulates the activity of the potassium/proton antiporter KhtU. Involved in protection of the cell from methylglyoxal, a toxic by-product of glycolysis. This chain is K(+)/H(+) antiporter modulator KhtS, found in Bacillus subtilis (strain 168).